The sequence spans 269 residues: Diaminopimelate epimerase (269 aa).

Residues N15, Q49, and N66 each coordinate substrate. C75 acts as the Proton donor in catalysis. Residues 76–77 (GN), N155, N187, and 204–205 (ER) contribute to the substrate site. Catalysis depends on C213, which acts as the Proton acceptor. Residue 214-215 (GS) coordinates substrate.

Belongs to the diaminopimelate epimerase family. In terms of assembly, homodimer.

The protein localises to the cytoplasm. The enzyme catalyses (2S,6S)-2,6-diaminopimelate = meso-2,6-diaminopimelate. It participates in amino-acid biosynthesis; L-lysine biosynthesis via DAP pathway; DL-2,6-diaminopimelate from LL-2,6-diaminopimelate: step 1/1. In terms of biological role, catalyzes the stereoinversion of LL-2,6-diaminopimelate (L,L-DAP) to meso-diaminopimelate (meso-DAP), a precursor of L-lysine and an essential component of the bacterial peptidoglycan. This Rickettsia bellii (strain OSU 85-389) protein is Diaminopimelate epimerase.